We begin with the raw amino-acid sequence, 448 residues long: Chaperone SurA (448 aa).

Positions methionine 1–alanine 27 are cleaved as a signal peptide. PpiC domains lie at glutamine 185–glutamate 288 and isoleucine 301–glycine 399.

The protein resides in the periplasm. It carries out the reaction [protein]-peptidylproline (omega=180) = [protein]-peptidylproline (omega=0). Its function is as follows. Chaperone involved in the correct folding and assembly of outer membrane proteins. Recognizes specific patterns of aromatic residues and the orientation of their side chains, which are found more frequently in integral outer membrane proteins. May act in both early periplasmic and late outer membrane-associated steps of protein maturation. The chain is Chaperone SurA from Burkholderia pseudomallei (strain 1710b).